A 316-amino-acid polypeptide reads, in one-letter code: Glycine--tRNA ligase alpha subunit (316 aa).

It belongs to the class-II aminoacyl-tRNA synthetase family. As to quaternary structure, tetramer of two alpha and two beta subunits.

It localises to the cytoplasm. It carries out the reaction tRNA(Gly) + glycine + ATP = glycyl-tRNA(Gly) + AMP + diphosphate. This Paracoccus denitrificans (strain Pd 1222) protein is Glycine--tRNA ligase alpha subunit.